Reading from the N-terminus, the 363-residue chain is Probable auxin efflux carrier component 5a (363 aa).

The next 10 membrane-spanning stretches (helical) occupy residues 7 to 27 (VYKV…GYGS), 39 to 59 (CDAV…FEFT), 72 to 92 (VAAD…WARF), 103 to 123 (SITS…VPMA), 134 to 154 (LVVQ…LFVL), 222 to 242 (FVGI…PSAF), 246 to 266 (VLIM…LFMA), 281 to 301 (LGLV…SIAV), 307 to 327 (VLRV…FIFA), and 342 to 362 (IFGM…LELI).

It belongs to the auxin efflux carrier (TC 2.A.69.1) family. In terms of tissue distribution, expressed in leaves, shoot apex and panicles. Expressed in roots, stem bases, stems, leaves and young panicles.

Its subcellular location is the membrane. In terms of biological role, may act as a component of the auxin efflux carrier. The sequence is that of Probable auxin efflux carrier component 5a from Oryza sativa subsp. japonica (Rice).